Consider the following 148-residue polypeptide: MKQFEIVTEPIQTEQYREFTINEYQGAVVVFTGHVREWTKGVKTEYLEYEAYIPMAEKKLAQIGDEINEKWPGTITSIVHRIGPLQISDIAVLIAVSSPHRKDAYRANEYAIERIKEIVPIWKKEIWEDGSKWQGHQKGNYEEAKREE.

Substrate contacts are provided by residues histidine 34 to arginine 36, threonine 44, histidine 100 to arginine 101, lysine 116, and lysine 123 to glutamate 125.

It belongs to the MoaE family. Heterotetramer of 2 MoaD subunits and 2 MoaE subunits. Also stable as homodimer. The enzyme changes between these two forms during catalysis.

The enzyme catalyses 2 [molybdopterin-synthase sulfur-carrier protein]-C-terminal-Gly-aminoethanethioate + cyclic pyranopterin phosphate + H2O = molybdopterin + 2 [molybdopterin-synthase sulfur-carrier protein]-C-terminal Gly-Gly + 2 H(+). Its pathway is cofactor biosynthesis; molybdopterin biosynthesis. Its function is as follows. Converts molybdopterin precursor Z into molybdopterin. This requires the incorporation of two sulfur atoms into precursor Z to generate a dithiolene group. The sulfur is provided by MoaD. The chain is Molybdopterin synthase catalytic subunit (moaE) from Staphylococcus aureus (strain COL).